The following is a 175-amino-acid chain: Translation initiation factor IF-3 (175 aa).

It belongs to the IF-3 family. As to quaternary structure, monomer.

It is found in the cytoplasm. IF-3 binds to the 30S ribosomal subunit and shifts the equilibrium between 70S ribosomes and their 50S and 30S subunits in favor of the free subunits, thus enhancing the availability of 30S subunits on which protein synthesis initiation begins. The polypeptide is Translation initiation factor IF-3 (Blochmanniella floridana).